The sequence spans 170 residues: Bifunctional protein PyrR (170 aa).

A PRPP-binding motif is present at residues 90–102 (LVLIDDVLMSGRT).

The protein belongs to the purine/pyrimidine phosphoribosyltransferase family. PyrR subfamily.

The enzyme catalyses UMP + diphosphate = 5-phospho-alpha-D-ribose 1-diphosphate + uracil. Functionally, regulates the transcription of the pyrimidine nucleotide (pyr) operon in response to exogenous pyrimidines. Its function is as follows. Also displays a weak uracil phosphoribosyltransferase activity which is not physiologically significant. The chain is Bifunctional protein PyrR from Pseudomonas savastanoi pv. phaseolicola (strain 1448A / Race 6) (Pseudomonas syringae pv. phaseolicola (strain 1448A / Race 6)).